The primary structure comprises 343 residues: Tetraacyldisaccharide 4'-kinase (343 aa).

Gly-61–Thr-68 contributes to the ATP binding site.

The protein belongs to the LpxK family.

The catalysed reaction is a lipid A disaccharide + ATP = a lipid IVA + ADP + H(+). It functions in the pathway glycolipid biosynthesis; lipid IV(A) biosynthesis; lipid IV(A) from (3R)-3-hydroxytetradecanoyl-[acyl-carrier-protein] and UDP-N-acetyl-alpha-D-glucosamine: step 6/6. Functionally, transfers the gamma-phosphate of ATP to the 4'-position of a tetraacyldisaccharide 1-phosphate intermediate (termed DS-1-P) to form tetraacyldisaccharide 1,4'-bis-phosphate (lipid IVA). The protein is Tetraacyldisaccharide 4'-kinase of Colwellia psychrerythraea (strain 34H / ATCC BAA-681) (Vibrio psychroerythus).